We begin with the raw amino-acid sequence, 126 residues long: Fluoride-specific ion channel FluC (126 aa).

A run of 4 helical transmembrane segments spans residues Val5 to Trp25, Trp35 to Phe55, Phe68 to Phe88, and Ala99 to Leu119. Positions 75 and 78 each coordinate Na(+).

The protein belongs to the fluoride channel Fluc/FEX (TC 1.A.43) family.

The protein resides in the cell inner membrane. The enzyme catalyses fluoride(in) = fluoride(out). Its activity is regulated as follows. Na(+) is not transported, but it plays an essential structural role and its presence is essential for fluoride channel function. Its function is as follows. Fluoride-specific ion channel. Important for reducing fluoride concentration in the cell, thus reducing its toxicity. The protein is Fluoride-specific ion channel FluC of Marinobacter nauticus (strain ATCC 700491 / DSM 11845 / VT8) (Marinobacter aquaeolei).